A 231-amino-acid chain; its full sequence is Octanoyl-[acyl-carrier-protein]:protein N-octanoyltransferase LIPT2, mitochondrial (231 aa).

Positions 41–224 constitute a BPL/LPL catalytic domain; that stretch reads GTKAGVLLVC…AFKETFKCTL (184 aa). Position 43 is an N6-succinyllysine (lysine 43). Substrate contacts are provided by residues 85-92, 154-156, and 167-169; these read RGGLATFH, AIG, and GLA. Catalysis depends on cysteine 185, which acts as the Acyl-thioester intermediate.

Belongs to the LipB family.

It localises to the mitochondrion. It carries out the reaction octanoyl-[ACP] + L-lysyl-[protein] = N(6)-octanoyl-L-lysyl-[protein] + holo-[ACP] + H(+). The protein operates within protein modification; protein lipoylation via endogenous pathway; protein N(6)-(lipoyl)lysine from octanoyl-[acyl-carrier-protein]: step 1/2. Catalyzes the transfer of endogenously produced octanoic acid from octanoyl-acyl-carrier-protein onto the lipoyl domains of lipoate-dependent enzymes such as the protein H of the glycine cleavage system (GCSH). Lipoyl-ACP can also act as a substrate although octanoyl-ACP is likely to be the physiological substrate. This is Octanoyl-[acyl-carrier-protein]:protein N-octanoyltransferase LIPT2, mitochondrial from Mus musculus (Mouse).